Consider the following 689-residue polypeptide: Solute carrier family 22 member 23 (689 aa).

2 disordered regions span residues 1–55 (MAID…PLPA) and 162–188 (TASW…GKGN). N-linked (GlcNAc...) asparagine glycosylation occurs at asparagine 24. A compositionally biased stretch (polar residues) spans 165–177 (WGTTSNRSNSSDT). The next 2 helical transmembrane spans lie at 229–249 (FSLL…ADWV) and 253–273 (PVLL…ALSV). Asparagine 274 is a glycosylation site (N-linked (GlcNAc...) asparagine). The next 8 membrane-spanning stretches (helical) occupy residues 283–303 (FFEG…RIEL), 310–330 (FIIT…MPGL), 339–359 (VLQA…SIFP), 462–482 (ADYY…CLVV), 489–509 (GGLL…LGLL), 541–561 (IAFS…SVFF), 572–592 (CGGL…APII), and 601–621 (FLHH…ILLL).

This sequence belongs to the major facilitator (TC 2.A.1) superfamily. Organic cation transporter (TC 2.A.1.19) family. As to expression, expressed in many tissues, including brain, spinal cord, kidney, liver, eye, adipose tissue, lung, epididymis, adrenal gland, pineal gland, skeletal muscle, heart, spleen, thymus, ovary, uterus, testis and epididymis.

The protein localises to the membrane. This chain is Solute carrier family 22 member 23 (Slc22a23), found in Rattus norvegicus (Rat).